Reading from the N-terminus, the 178-residue chain is MTQLSSNDVPSMGRRQFMNLLTFGTATGVALGALYPVANYFMPLRAGGGGGGTSAKDELGNPVTKTGWLASHQAGDRSLVQGLKGDPTYLIVNSEGEIGEFGLNAICTHLGCVVPWDSGANKFICPCHGSQYDTNGKVVRGPAPLSLALAHVDVDDDAVLVKQWSETDFRTNENPWWA.

The chain crosses the membrane as a helical span at residues leucine 20–methionine 42. The region spanning lysine 65 to valine 161 is the Rieske domain. Cysteine 107, histidine 109, cysteine 125, and histidine 128 together coordinate [2Fe-2S] cluster. An intrachain disulfide couples cysteine 112 to cysteine 127.

Belongs to the Rieske iron-sulfur protein family. The 4 large subunits of the cytochrome b6-f complex are cytochrome b6, subunit IV (17 kDa polypeptide, PetD), cytochrome f and the Rieske protein, while the 4 small subunits are PetG, PetL, PetM and PetN. The complex functions as a dimer. Requires [2Fe-2S] cluster as cofactor.

Its subcellular location is the cellular thylakoid membrane. The enzyme catalyses 2 oxidized [plastocyanin] + a plastoquinol + 2 H(+)(in) = 2 reduced [plastocyanin] + a plastoquinone + 4 H(+)(out). Component of the cytochrome b6-f complex, which mediates electron transfer between photosystem II (PSII) and photosystem I (PSI), cyclic electron flow around PSI, and state transitions. This is Cytochrome b6-f complex iron-sulfur subunit from Prochlorococcus marinus subsp. pastoris (strain CCMP1986 / NIES-2087 / MED4).